The following is a 688-amino-acid chain: Elongation factor G (688 aa).

A tr-type G domain is found at 8–282 (ERTRNIGIMA…AVLDYLPAPT (275 aa)). GTP is bound by residues 17-24 (AHIDAGKT), 81-85 (DTPGH), and 135-138 (NKMD).

This sequence belongs to the TRAFAC class translation factor GTPase superfamily. Classic translation factor GTPase family. EF-G/EF-2 subfamily.

The protein resides in the cytoplasm. Functionally, catalyzes the GTP-dependent ribosomal translocation step during translation elongation. During this step, the ribosome changes from the pre-translocational (PRE) to the post-translocational (POST) state as the newly formed A-site-bound peptidyl-tRNA and P-site-bound deacylated tRNA move to the P and E sites, respectively. Catalyzes the coordinated movement of the two tRNA molecules, the mRNA and conformational changes in the ribosome. This is Elongation factor G from Clostridioides difficile (strain 630) (Peptoclostridium difficile).